A 78-amino-acid polypeptide reads, in one-letter code: Magnetosome protein MamL (78 aa).

The signal sequence occupies residues 1–22 (MVRVIGSLVFGGLILLLASSNA). Over 23-38 (HMVETRFGPLIMLAPH) the chain is Lumenal. A helical membrane pass occupies residues 39–59 (FVVLGITFFLGFAIGIVLVFA). The Cytoplasmic portion of the chain corresponds to 60–78 (NVMKRRKHKLPGKNIVIKR).

It belongs to the magnetosome MamL family.

It localises to the magnetosome membrane. In terms of biological role, involved in magnetite crystal maturation, but not in magnetosome vesicle tubulation or formation. One of 7 genes (mamLQBIEMO) able to induce magnetosome membrane biogenesis; coexpression of mamLQRBIEMO in a deletion of the 17 gene mamAB operon restores magnetosome vesicle formation but not magnetite biosynthesis. This Magnetospirillum gryphiswaldense (strain DSM 6361 / JCM 21280 / NBRC 15271 / MSR-1) protein is Magnetosome protein MamL.